We begin with the raw amino-acid sequence, 303 residues long: Methionyl-tRNA formyltransferase (303 aa).

108 to 111 (SDLP) serves as a coordination point for (6S)-5,6,7,8-tetrahydrofolate.

The protein belongs to the Fmt family.

The catalysed reaction is L-methionyl-tRNA(fMet) + (6R)-10-formyltetrahydrofolate = N-formyl-L-methionyl-tRNA(fMet) + (6S)-5,6,7,8-tetrahydrofolate + H(+). In terms of biological role, attaches a formyl group to the free amino group of methionyl-tRNA(fMet). The formyl group appears to play a dual role in the initiator identity of N-formylmethionyl-tRNA by promoting its recognition by IF2 and preventing the misappropriation of this tRNA by the elongation apparatus. The chain is Methionyl-tRNA formyltransferase from Rickettsia africae (strain ESF-5).